The primary structure comprises 64 residues: Large ribosomal subunit protein uL30 (64 aa).

Belongs to the universal ribosomal protein uL30 family. Part of the 50S ribosomal subunit.

The polypeptide is Large ribosomal subunit protein uL30 (Rhodopseudomonas palustris (strain BisB18)).